A 293-amino-acid chain; its full sequence is DNA-directed RNA polymerase III subunit RPC6 (293 aa).

This sequence belongs to the eukaryotic RPC34/RPC39 RNA polymerase subunit family. In terms of assembly, component of the RNA polymerase III (Pol III) complex consisting of 17 subunits.

It localises to the nucleus. In terms of biological role, DNA-dependent RNA polymerase catalyzes the transcription of DNA into RNA using the four ribonucleoside triphosphates as substrates. Specific peripheric component of RNA polymerase III which synthesizes small RNAs, such as 5S rRNA and tRNAs. The sequence is that of DNA-directed RNA polymerase III subunit RPC6 from Drosophila melanogaster (Fruit fly).